A 466-amino-acid polypeptide reads, in one-letter code: Tubulointerstitial nephritis antigen-like (466 aa).

The signal sequence occupies residues 1–21; that stretch reads MWGCWLGLLLLLLAGQAALEA. The SMB domain occupies 49–96; that stretch reads EQDMCCRGRADECALPYLGATCYCDLFCNRTVSDCCPDFWDFCLGIPP. Disulfide bonds link C53-C72, C70-C72, C70-C84, C76-C83, and C84-C91. N77 is a glycosylation site (N-linked (GlcNAc...) asparagine). N160 carries an N-linked (GlcNAc...) asparagine glycan.

Belongs to the peptidase C1 family. In terms of processing, glycosylated. As to expression, highly expressed in kidney, heart and adrenocortical cells of adrenal glands. Moderately expressed in spleen and liver. Also found in prostate, seminal vesicle, epididymis and testis in male reproductive organs. In adrenal glands is found in the outer cortical regions corresponding to the zona glomerulosa (zG) and the undifferentiated cell zone (zU) (at protein level).

It localises to the secreted. Functionally, may be implicated in the adrenocortical zonation and in mechanisms for repressing the CYP11B1 gene expression in adrenocortical cells. This is a non catalytic peptidase C1 family protein. This is Tubulointerstitial nephritis antigen-like (Tinagl1) from Mus musculus (Mouse).